Here is a 500-residue protein sequence, read N- to C-terminus: Oryzalexin D synthase (500 aa).

The helical transmembrane segment at 4–24 threads the bilayer; sequence SQMWLLWGALSVALFFYFSTL. Cys442 contributes to the heme binding site.

Belongs to the cytochrome P450 family. It depends on heme as a cofactor.

It localises to the membrane. The catalysed reaction is ent-cassa-12,15-diene + reduced [NADPH--hemoprotein reductase] + O2 = ent-11beta-hydroxycassa-12,15-diene + oxidized [NADPH--hemoprotein reductase] + H2O + H(+). It carries out the reaction ent-sandaracopimaradien-3beta-ol + reduced [NADPH--hemoprotein reductase] + O2 = oryzalexin D + oxidized [NADPH--hemoprotein reductase] + H2O + H(+). Its function is as follows. Enzyme of the diterpenoid metabolism involved in the biosynthesis of both phytocassane and the oryzalexin class of phytoalexins. Can hydroxylate syn-pimaradiene, ent-pimaradiene, ent-sandaracopimaradiene, ent-isokaurene, ent-kaurene, and ent-cassadiene, but no activity with syn-stemodene, syn-stemarene, syn-labdatriene, C11-alpha-hydroxy-ent-cassadiene or syn-pimadien-19-oic acid as substrates. Hydroxylates 3-alpha-hydroxy-ent-sandaracopimaradiene at C-7-beta, resulting in a 3-alpha,7-beta-diol corresponding to oryzalexins D. This chain is Oryzalexin D synthase, found in Oryza sativa subsp. japonica (Rice).